Consider the following 151-residue polypeptide: Deoxyuridine 5'-triphosphate nucleotidohydrolase (151 aa).

Substrate contacts are provided by residues 70-72, Asn-83, 87-89, and Met-97; these read RSG and LID.

This sequence belongs to the dUTPase family. It depends on Mg(2+) as a cofactor.

The catalysed reaction is dUTP + H2O = dUMP + diphosphate + H(+). It participates in pyrimidine metabolism; dUMP biosynthesis; dUMP from dCTP (dUTP route): step 2/2. Functionally, this enzyme is involved in nucleotide metabolism: it produces dUMP, the immediate precursor of thymidine nucleotides and it decreases the intracellular concentration of dUTP so that uracil cannot be incorporated into DNA. This chain is Deoxyuridine 5'-triphosphate nucleotidohydrolase, found in Actinobacillus succinogenes (strain ATCC 55618 / DSM 22257 / CCUG 43843 / 130Z).